Reading from the N-terminus, the 497-residue chain is Probable malate:quinone oxidoreductase (497 aa).

The protein belongs to the MQO family. FAD serves as cofactor.

It catalyses the reaction (S)-malate + a quinone = a quinol + oxaloacetate. It participates in carbohydrate metabolism; tricarboxylic acid cycle; oxaloacetate from (S)-malate (quinone route): step 1/1. This is Probable malate:quinone oxidoreductase from Hahella chejuensis (strain KCTC 2396).